A 328-amino-acid chain; its full sequence is Tetraacyldisaccharide 4'-kinase (328 aa).

An ATP-binding site is contributed by 55–62 (TAGGNGKT).

This sequence belongs to the LpxK family.

The catalysed reaction is a lipid A disaccharide + ATP = a lipid IVA + ADP + H(+). The protein operates within glycolipid biosynthesis; lipid IV(A) biosynthesis; lipid IV(A) from (3R)-3-hydroxytetradecanoyl-[acyl-carrier-protein] and UDP-N-acetyl-alpha-D-glucosamine: step 6/6. In terms of biological role, transfers the gamma-phosphate of ATP to the 4'-position of a tetraacyldisaccharide 1-phosphate intermediate (termed DS-1-P) to form tetraacyldisaccharide 1,4'-bis-phosphate (lipid IVA). This Escherichia coli (strain SMS-3-5 / SECEC) protein is Tetraacyldisaccharide 4'-kinase.